Reading from the N-terminus, the 516-residue chain is GMP synthase [glutamine-hydrolyzing] (516 aa).

The Glutamine amidotransferase type-1 domain occupies 10-201 (KIIVLDFGSQ…AFDVCGAVAN (192 aa)). Catalysis depends on C87, which acts as the Nucleophile. Residues H175 and E177 contribute to the active site. Residues 202-391 (WTMADFIDMQ…LGIPHDLVWR (190 aa)) form the GMPS ATP-PPase domain. An ATP-binding site is contributed by 229–235 (SGGVDSS).

As to quaternary structure, homodimer.

It catalyses the reaction XMP + L-glutamine + ATP + H2O = GMP + L-glutamate + AMP + diphosphate + 2 H(+). It functions in the pathway purine metabolism; GMP biosynthesis; GMP from XMP (L-Gln route): step 1/1. Its function is as follows. Catalyzes the synthesis of GMP from XMP. This is GMP synthase [glutamine-hydrolyzing] from Lactobacillus acidophilus (strain ATCC 700396 / NCK56 / N2 / NCFM).